Consider the following 334-residue polypeptide: 6-phosphogluconolactonase (334 aa).

This sequence belongs to the cycloisomerase 2 family.

The enzyme catalyses 6-phospho-D-glucono-1,5-lactone + H2O = 6-phospho-D-gluconate + H(+). Its pathway is carbohydrate degradation; pentose phosphate pathway; D-ribulose 5-phosphate from D-glucose 6-phosphate (oxidative stage): step 2/3. Catalyzes the hydrolysis of 6-phosphogluconolactone to 6-phosphogluconate. The polypeptide is 6-phosphogluconolactonase (Yersinia pseudotuberculosis serotype IB (strain PB1/+)).